The primary structure comprises 533 residues: Probable dolichyl pyrophosphate Man9GlcNAc2 alpha-1,3-glucosyltransferase (533 aa).

The tract at residues 1-20 (MPKKKPAKHSGEDDITIPVS) is disordered. Helical transmembrane passes span 42–64 (FLCI…YSGA), 149–169 (WTVL…FVLV), 184–204 (WHIA…GHFQ), 214–234 (VGAI…LFSL), 264–284 (ILSV…FWWP), 360–380 (GFLY…FQVH), 422–442 (LLIP…SPGN), 463–483 (VFLL…YLTI), and 491–511 (FLFE…FAFY).

It belongs to the ALG6/ALG8 glucosyltransferase family.

Its subcellular location is the endoplasmic reticulum membrane. It catalyses the reaction an alpha-D-Man-(1-&gt;2)-alpha-D-Man-(1-&gt;2)-alpha-D-Man-(1-&gt;3)-[alpha-D-Man-(1-&gt;2)-alpha-D-Man-(1-&gt;3)-[alpha-D-Man-(1-&gt;2)-alpha-D-Man-(1-&gt;6)]-alpha-D-Man-(1-&gt;6)]-beta-D-Man-(1-&gt;4)-beta-D-GlcNAc-(1-&gt;4)-alpha-D-GlcNAc-diphospho-di-trans,poly-cis-dolichol + a di-trans,poly-cis-dolichyl beta-D-glucosyl phosphate = an alpha-D-Glc-(1-&gt;3)-alpha-D-Man-(1-&gt;2)-alpha-D-Man-(1-&gt;2)-alpha-D-Man-(1-&gt;3)-[alpha-D-Man-(1-&gt;2)-alpha-D-Man-(1-&gt;3)-[alpha-D-Man-(1-&gt;2)-alpha-D-Man-(1-&gt;6)]-alpha-D-Man-(1-&gt;6)]-beta-D-Man-(1-&gt;4)-beta-D-GlcNAc-(1-&gt;4)-alpha-D-GlcNAc-diphospho-di-trans,poly-cis-dolichol + a di-trans,poly-cis-dolichyl phosphate + H(+). The protein operates within protein modification; protein glycosylation. Its function is as follows. Adds the first glucose residue to the lipid-linked oligosaccharide precursor for N-linked glycosylation. Transfers glucose from dolichyl phosphate glucose (Dol-P-Glc) onto the lipid-linked oligosaccharide Man(9)GlcNAc(2)-PP-Dol. The chain is Probable dolichyl pyrophosphate Man9GlcNAc2 alpha-1,3-glucosyltransferase from Arabidopsis thaliana (Mouse-ear cress).